The chain runs to 494 residues: Guanosine-5'-triphosphate,3'-diphosphate pyrophosphatase (494 aa).

It belongs to the GppA/Ppx family. GppA subfamily.

The enzyme catalyses guanosine 3'-diphosphate 5'-triphosphate + H2O = guanosine 3',5'-bis(diphosphate) + phosphate + H(+). The protein operates within purine metabolism; ppGpp biosynthesis; ppGpp from GTP: step 2/2. Its function is as follows. Catalyzes the conversion of pppGpp to ppGpp. Guanosine pentaphosphate (pppGpp) is a cytoplasmic signaling molecule which together with ppGpp controls the 'stringent response', an adaptive process that allows bacteria to respond to amino acid starvation, resulting in the coordinated regulation of numerous cellular activities. The protein is Guanosine-5'-triphosphate,3'-diphosphate pyrophosphatase of Shigella flexneri serotype 5b (strain 8401).